We begin with the raw amino-acid sequence, 357 residues long: Peptide chain release factor 1 (357 aa).

N5-methylglutamine is present on glutamine 236.

The protein belongs to the prokaryotic/mitochondrial release factor family. Methylated by PrmC. Methylation increases the termination efficiency of RF1.

Its subcellular location is the cytoplasm. Functionally, peptide chain release factor 1 directs the termination of translation in response to the peptide chain termination codons UAG and UAA. This chain is Peptide chain release factor 1, found in Mycolicibacterium gilvum (strain PYR-GCK) (Mycobacterium gilvum (strain PYR-GCK)).